Reading from the N-terminus, the 82-residue chain is Putative membrane protein insertion efficiency factor (82 aa).

This sequence belongs to the UPF0161 family.

It localises to the cell inner membrane. In terms of biological role, could be involved in insertion of integral membrane proteins into the membrane. The sequence is that of Putative membrane protein insertion efficiency factor from Rickettsia peacockii (strain Rustic).